Reading from the N-terminus, the 2763-residue chain is Large tegument protein deneddylase (2763 aa).

The deubiquitination activity stretch occupies residues 1–247 (MDIIPPIAVT…CDTYFTDEQY (247 aa)). The Peptidase C76 domain maps to 12 to 237 (AGVGSRNQFD…SSAVTLIYGS (226 aa)). Active-site residues include C32, D168, and H170. An interaction with inner tegument protein region spans residues 495 to 523 (LELFINLTILRLTGFVVENGTRTHHGATS). Repeat copies occupy residues 2455–2457 (PVQ), 2458–2460 (PVQ), 2461–2463 (PAQ), 2464–2466 (PVQ), 2467–2469 (PAQ), 2470–2472 (PAQ), 2473–2475 (PVQ), and 2476–2478 (PAQ). Positions 2455 to 2478 (PVQPVQPAQPVQPAQPAQPVQPAQ) are 8 X 3 AA repeats of P-A/V-Q. The segment at 2630–2651 (NYKTRQPSPNFPRDVHTWGVSS) is disordered.

This sequence belongs to the herpesviridae large tegument protein family. Interacts with host CUL1 and CUL4A; these interactions inhibit the E3 ligase activity of cullins. Interacts with inner tegument protein. Interacts with capsid vertex specific component CVC2. Interacts with the major capsid protein/MCP.

It localises to the virion tegument. It is found in the host cytoplasm. The protein localises to the host nucleus. The enzyme catalyses Thiol-dependent hydrolysis of ester, thioester, amide, peptide and isopeptide bonds formed by the C-terminal Gly of ubiquitin (a 76-residue protein attached to proteins as an intracellular targeting signal).. Its function is as follows. Large tegument protein that plays multiple roles in the viral cycle. During viral entry, remains associated with the capsid while most of the tegument is detached and participates in the capsid transport toward the host nucleus. Plays a role in the routing of the capsid at the nuclear pore complex and subsequent uncoating. Within the host nucleus, acts as a deneddylase and promotes the degradation of nuclear CRLs (cullin-RING ubiquitin ligases) and thereby stabilizes nuclear CRL substrates, while cytoplasmic CRLs remain unaffected. These modifications prevent host cell cycle S-phase progression and create a favorable environment allowing efficient viral genome replication. Participates later in the secondary envelopment of capsids. Indeed, plays a linker role for the association of the outer viral tegument to the capsids together with the inner tegument protein. The polypeptide is Large tegument protein deneddylase (Varicella-zoster virus (strain Oka vaccine) (HHV-3)).